Here is a 59-residue protein sequence, read N- to C-terminus: Cecropin-B1 (59 aa).

The N-terminal stretch at 1–23 is a signal peptide; sequence MNFNKLFLIVILAALLLLGQTEA. At Leu-57 the chain carries Leucine amide.

It belongs to the cecropin family.

It is found in the secreted. In terms of biological role, cecropins have lytic and antibacterial activity against several Gram-positive and Gram-negative bacteria. The protein is Cecropin-B1 (CECB1) of Culex pipiens pipiens (Northern house mosquito).